Consider the following 74-residue polypeptide: Sec-independent protein translocase protein TatA (74 aa).

A helical membrane pass occupies residues 1-21 (MGGISIWQLLIIVAIVVLLFG). The segment at 45–74 (EEPKDAEFKSLDKAENTAQTKKEEKEKEQA) is disordered.

Belongs to the TatA/E family. The Tat system comprises two distinct complexes: a TatABC complex, containing multiple copies of TatA, TatB and TatC subunits, and a separate TatA complex, containing only TatA subunits. Substrates initially bind to the TatABC complex, which probably triggers association of the separate TatA complex to form the active translocon.

It is found in the cell inner membrane. Functionally, part of the twin-arginine translocation (Tat) system that transports large folded proteins containing a characteristic twin-arginine motif in their signal peptide across membranes. TatA could form the protein-conducting channel of the Tat system. The protein is Sec-independent protein translocase protein TatA of Actinobacillus succinogenes (strain ATCC 55618 / DSM 22257 / CCUG 43843 / 130Z).